Reading from the N-terminus, the 237-residue chain is Phosphoribosylaminoimidazole-succinocarboxamide synthase (237 aa).

It belongs to the SAICAR synthetase family.

It catalyses the reaction 5-amino-1-(5-phospho-D-ribosyl)imidazole-4-carboxylate + L-aspartate + ATP = (2S)-2-[5-amino-1-(5-phospho-beta-D-ribosyl)imidazole-4-carboxamido]succinate + ADP + phosphate + 2 H(+). It functions in the pathway purine metabolism; IMP biosynthesis via de novo pathway; 5-amino-1-(5-phospho-D-ribosyl)imidazole-4-carboxamide from 5-amino-1-(5-phospho-D-ribosyl)imidazole-4-carboxylate: step 1/2. The polypeptide is Phosphoribosylaminoimidazole-succinocarboxamide synthase (Marinobacter nauticus (strain ATCC 700491 / DSM 11845 / VT8) (Marinobacter aquaeolei)).